Reading from the N-terminus, the 120-residue chain is SPbeta prophage-derived DSR anti-defense 1 (120 aa).

The protein belongs to the DSR anti-defense 1 family. Interacts with Bacillus subtilis DSR2 (via C-terminus) in a 2:4 ratio; this interaction leads to the absence of activation of the NADase defense activity of DSR2.

Functionally, counteracts the defense-associated sirtuin 2 (DSR2) defense system of the host. Inhibits the NADase activity of host DSR2 by competing with the tail tube protein that normally activates DSR2. The sequence is that of SPbeta prophage-derived DSR anti-defense 1 (yotI) from Bacillus subtilis (strain 168).